The chain runs to 250 residues: MTLLEKTRKLNRILQKTGIQPVDFMEMASILKEVIEANVYILSRKGKVLGYSALKDYGDEIFAKDKAIPEEYNDRLLRVTETLANDKGKLFKEEKALADLIVTVVPINGGGDRLGTLLLIRSTKEFTDDDLIIAEYGATVVGLEILRAKNEEIEEEARKRAVVQMALATLSYSELQAIKNIFEELKGKEGLLVASKIADKVGITRSVIVNALRKFESAGIIESRSLGMKGTHIRVLNEKLLEELEKMKRD.

The segment at 1–146 (MTLLEKTRKL…GATVVGLEIL (146 aa)) is GAF domain. The H-T-H motif DNA-binding region spans 194–213 (ASKIADKVGITRSVIVNALR).

It belongs to the CodY family.

It localises to the cytoplasm. DNA-binding global transcriptional regulator which is involved in the adaptive response to starvation and acts by directly or indirectly controlling the expression of numerous genes in response to nutrient availability. During rapid exponential growth, CodY is highly active and represses genes whose products allow adaptation to nutrient depletion. This chain is Global transcriptional regulator CodY, found in Caldanaerobacter subterraneus subsp. tengcongensis (strain DSM 15242 / JCM 11007 / NBRC 100824 / MB4) (Thermoanaerobacter tengcongensis).